The sequence spans 156 residues: 6,7-dimethyl-8-ribityllumazine synthase (156 aa).

Residues F23, 57-59 (AFE), and 81-83 (AII) each bind 5-amino-6-(D-ribitylamino)uracil. 86 to 87 (ST) contributes to the (2S)-2-hydroxy-3-oxobutyl phosphate binding site. The active-site Proton donor is H89. F114 is a 5-amino-6-(D-ribitylamino)uracil binding site. R128 is a binding site for (2S)-2-hydroxy-3-oxobutyl phosphate.

It belongs to the DMRL synthase family.

The enzyme catalyses (2S)-2-hydroxy-3-oxobutyl phosphate + 5-amino-6-(D-ribitylamino)uracil = 6,7-dimethyl-8-(1-D-ribityl)lumazine + phosphate + 2 H2O + H(+). It participates in cofactor biosynthesis; riboflavin biosynthesis; riboflavin from 2-hydroxy-3-oxobutyl phosphate and 5-amino-6-(D-ribitylamino)uracil: step 1/2. Its function is as follows. Catalyzes the formation of 6,7-dimethyl-8-ribityllumazine by condensation of 5-amino-6-(D-ribitylamino)uracil with 3,4-dihydroxy-2-butanone 4-phosphate. This is the penultimate step in the biosynthesis of riboflavin. The protein is 6,7-dimethyl-8-ribityllumazine synthase of Wolinella succinogenes (strain ATCC 29543 / DSM 1740 / CCUG 13145 / JCM 31913 / LMG 7466 / NCTC 11488 / FDC 602W) (Vibrio succinogenes).